We begin with the raw amino-acid sequence, 25 residues long: Insulin mimetic protein (25 aa).

Residues 1–25 (TKDPELKQCKKQQKKQQQYDDDDKK) are disordered.

In terms of processing, glycosylated. In terms of tissue distribution, expressed in seed.

The chain is Insulin mimetic protein from Cnidoscolus quercifolius.